Here is a 250-residue protein sequence, read N- to C-terminus: Proteasome subunit alpha (250 aa).

Belongs to the peptidase T1A family. As to quaternary structure, the 20S proteasome core is composed of 14 alpha and 14 beta subunits that assemble into four stacked heptameric rings, resulting in a barrel-shaped structure. The two inner rings, each composed of seven catalytic beta subunits, are sandwiched by two outer rings, each composed of seven alpha subunits. The catalytic chamber with the active sites is on the inside of the barrel. Has a gated structure, the ends of the cylinder being occluded by the N-termini of the alpha-subunits. Is capped at one or both ends by the proteasome regulatory ATPase, PAN.

The protein resides in the cytoplasm. Its activity is regulated as follows. The formation of the proteasomal ATPase PAN-20S proteasome complex, via the docking of the C-termini of PAN into the intersubunit pockets in the alpha-rings, triggers opening of the gate for substrate entry. Interconversion between the open-gate and close-gate conformations leads to a dynamic regulation of the 20S proteasome proteolysis activity. Its function is as follows. Component of the proteasome core, a large protease complex with broad specificity involved in protein degradation. This chain is Proteasome subunit alpha, found in Haloquadratum walsbyi (strain DSM 16790 / HBSQ001).